The following is a 142-amino-acid chain: Large ribosomal subunit protein uL13 (142 aa).

This sequence belongs to the universal ribosomal protein uL13 family. In terms of assembly, part of the 50S ribosomal subunit.

Its function is as follows. This protein is one of the early assembly proteins of the 50S ribosomal subunit, although it is not seen to bind rRNA by itself. It is important during the early stages of 50S assembly. The sequence is that of Large ribosomal subunit protein uL13 from Marinomonas sp. (strain MWYL1).